A 463-amino-acid polypeptide reads, in one-letter code: ATP synthase subunit beta (463 aa).

An ATP-binding site is contributed by 152-159 (GGAGVGKT).

It belongs to the ATPase alpha/beta chains family. As to quaternary structure, F-type ATPases have 2 components, CF(1) - the catalytic core - and CF(0) - the membrane proton channel. CF(1) has five subunits: alpha(3), beta(3), gamma(1), delta(1), epsilon(1). CF(0) has three main subunits: a(1), b(2) and c(9-12). The alpha and beta chains form an alternating ring which encloses part of the gamma chain. CF(1) is attached to CF(0) by a central stalk formed by the gamma and epsilon chains, while a peripheral stalk is formed by the delta and b chains.

The protein localises to the cell inner membrane. It carries out the reaction ATP + H2O + 4 H(+)(in) = ADP + phosphate + 5 H(+)(out). Its function is as follows. Produces ATP from ADP in the presence of a proton gradient across the membrane. The catalytic sites are hosted primarily by the beta subunits. The polypeptide is ATP synthase subunit beta (Shewanella baltica (strain OS223)).